The primary structure comprises 365 residues: Phosphate acyltransferase (365 aa).

It belongs to the PlsX family. As to quaternary structure, homodimer. Probably interacts with PlsY.

Its subcellular location is the cytoplasm. The enzyme catalyses a fatty acyl-[ACP] + phosphate = an acyl phosphate + holo-[ACP]. It functions in the pathway lipid metabolism; phospholipid metabolism. Functionally, catalyzes the reversible formation of acyl-phosphate (acyl-PO(4)) from acyl-[acyl-carrier-protein] (acyl-ACP). This enzyme utilizes acyl-ACP as fatty acyl donor, but not acyl-CoA. The protein is Phosphate acyltransferase of Jannaschia sp. (strain CCS1).